The primary structure comprises 157 residues: Endoribonuclease YbeY (157 aa).

Positions 114, 118, and 124 each coordinate Zn(2+).

It belongs to the endoribonuclease YbeY family. The cofactor is Zn(2+).

The protein localises to the cytoplasm. Its function is as follows. Single strand-specific metallo-endoribonuclease involved in late-stage 70S ribosome quality control and in maturation of the 3' terminus of the 16S rRNA. This Salmonella dublin (strain CT_02021853) protein is Endoribonuclease YbeY.